The following is a 30-amino-acid chain: Hemocyanin subunit 2 (30 aa).

The protein belongs to the tyrosinase family. Hemocyanin subfamily. In terms of tissue distribution, hemolymph.

The protein localises to the secreted. The protein resides in the extracellular space. In terms of biological role, hemocyanins are copper-containing oxygen carriers occurring freely dissolved in the hemolymph of many mollusks and arthropods. This is Hemocyanin subunit 2 from Homarus americanus (American lobster).